The sequence spans 283 residues: Tryptophan 2,3-dioxygenase (283 aa).

Substrate-binding positions include 52 to 56, Y114, and R118; that span reads FIIQH. Heme is bound at residue H241. Residue T255 coordinates substrate.

It belongs to the tryptophan 2,3-dioxygenase family. As to quaternary structure, homotetramer. Heme is required as a cofactor.

It catalyses the reaction L-tryptophan + O2 = N-formyl-L-kynurenine. It functions in the pathway amino-acid degradation; L-tryptophan degradation via kynurenine pathway; L-kynurenine from L-tryptophan: step 1/2. In terms of biological role, heme-dependent dioxygenase that catalyzes the oxidative cleavage of the L-tryptophan (L-Trp) pyrrole ring and converts L-tryptophan to N-formyl-L-kynurenine. Catalyzes the oxidative cleavage of the indole moiety. The polypeptide is Tryptophan 2,3-dioxygenase (Pseudomonas fluorescens (strain ATCC BAA-477 / NRRL B-23932 / Pf-5)).